Here is a 363-residue protein sequence, read N- to C-terminus: MALLEIRNVTRRFGGYTAVDNVSIDVEAGEFFTLLGPSGCGKTTLLRMIAGFDLPDSGQILLDGKDMVGIPPEKRPVHTVFQTYALFPHMTVADNIAFPLKMAGKAPQEIKKRVNELLERVHLPNFGNRFPHELSGGQKQRVAFARGLVNRPRLLLLDEPLGALDAKLREEMQIELINLQKEIGITFIFVTHAQDEALALSHRIAVMNRGNVEQIDEPSKIYSAPRNHFVADFIGKISVMNATVMEAVPSHLKLAIEGLGEVTAPAREGMEVGDKGVLAIRPEQVRISHPSNESQLKNHFRGKVHDFLYVGDVTTYIVELANGAYIEALLPNSAPGRAKFFEVDDEVTISWRHDAGIFLNDPE.

Residues 4 to 234 form the ABC transporter domain; the sequence is LEIRNVTRRF…PRNHFVADFI (231 aa). 36–43 lines the ATP pocket; sequence GPSGCGKT.

This sequence belongs to the ABC transporter superfamily. Spermidine/putrescine importer (TC 3.A.1.11.1) family. As to quaternary structure, the complex is composed of two ATP-binding proteins (PotA), two transmembrane proteins (PotB and PotC) and a solute-binding protein (PotD).

Its subcellular location is the cell inner membrane. It catalyses the reaction ATP + H2O + polyamine-[polyamine-binding protein]Side 1 = ADP + phosphate + polyamineSide 2 + [polyamine-binding protein]Side 1.. In terms of biological role, part of the ABC transporter complex PotABCD involved in spermidine/putrescine import. Responsible for energy coupling to the transport system. The chain is Spermidine/putrescine import ATP-binding protein PotA from Nitrosospira multiformis (strain ATCC 25196 / NCIMB 11849 / C 71).